A 525-amino-acid polypeptide reads, in one-letter code: Cytochrome P450 714A2 (525 aa).

Residues 1–3 (MES) are Lumenal-facing. Residues 4–24 (LVVHTVNAIWCIVIVGIFSVG) form a helical; Signal-anchor for type III membrane protein membrane-spanning segment. Over 25–525 (YHVYGRAVVE…PQHGVVIRVV (501 aa)) the chain is Cytoplasmic. Cys-475 contributes to the heme binding site.

Belongs to the cytochrome P450 family. It depends on heme as a cofactor. As to expression, expressed in the shoot apical meristem (SAM) and petioles of young leaves, in the leaf margin and petiole vein of cotyledons, and at low levels in the filaments of developing flowers. Not detected in siliques.

The protein localises to the endoplasmic reticulum membrane. In terms of biological role, involved in the inactivation of early gibberellin (GA) intermediates. The chain is Cytochrome P450 714A2 (CYP714A2) from Arabidopsis thaliana (Mouse-ear cress).